A 107-amino-acid chain; its full sequence is Nucleoid-associated protein PHZ_c0369 (107 aa).

This sequence belongs to the YbaB/EbfC family. As to quaternary structure, homodimer.

The protein resides in the cytoplasm. It localises to the nucleoid. Binds to DNA and alters its conformation. May be involved in regulation of gene expression, nucleoid organization and DNA protection. This is Nucleoid-associated protein PHZ_c0369 from Phenylobacterium zucineum (strain HLK1).